The chain runs to 235 residues: MICOS complex subunit MIC25 (235 aa).

The N-myristoyl glycine moiety is linked to residue Gly-2. Residues Ser-13 and Ser-31 each carry the phosphoserine modification. Disordered stretches follow at residues 31 to 90 (SENV…VKRY) and 106 to 132 (KRER…HEEQ). Residues 129-176 (HEEQKSVRLARELESREAELRRRDTFYKEQLERIERKNAEMYKLSSEQ) adopt a coiled-coil conformation. The CHCH domain occupies 194–235 (EPVCSGLQAQILHCYRDRPHEVLLCSDLVKAYQRCVSAAHKG). 2 short sequence motifs (cx9C motif) span residues 197–207 (CSGLQAQILHC) and 218–228 (CSDLVKAYQRC). Disulfide bonds link Cys-197–Cys-228 and Cys-207–Cys-218.

The protein belongs to the MICOS complex subunit Mic19 family. Metazoan Mic25 subfamily. As to quaternary structure, component of the mitochondrial contact site and cristae organizing system (MICOS) complex, composed of at least MICOS10/MIC10, CHCHD3/MIC19, CHCHD6/MIC25, APOOL/MIC27, IMMT/MIC60, APOO/MIC23/MIC26 and MICOS13/MIC13. This complex was also known under the names MINOS or MitOS complex. The MICOS complex associates with mitochondrial outer membrane proteins SAMM50, MTX1 and MTX2 (together described as components of the mitochondrial outer membrane sorting assembly machinery (SAM) complex) and DNAJC11, mitochondrial inner membrane protein TMEM11 and with HSPA9. The MICOS and SAM complexes together with DNAJC11 are part of a large protein complex spanning both membranes termed the mitochondrial intermembrane space bridging (MIB) complex. Interacts with DISC1. Interacts with DISC1. Interacts with IMMT/MIC60. (Microbial infection) Interacts with human cytomegalovirus protein UL37 isoform vMIA; this interaction rewires mitochondria by engaging the conserved MICOS complex.

The protein localises to the mitochondrion inner membrane. Its subcellular location is the mitochondrion. In terms of biological role, component of the MICOS complex, a large protein complex of the mitochondrial inner membrane that plays crucial roles in the maintenance of crista junctions, inner membrane architecture, and formation of contact sites to the outer membrane. This is MICOS complex subunit MIC25 (CHCHD6) from Homo sapiens (Human).